The following is a 504-amino-acid chain: Maturase K (504 aa).

This sequence belongs to the intron maturase 2 family. MatK subfamily.

It is found in the plastid. Its subcellular location is the chloroplast. In terms of biological role, usually encoded in the trnK tRNA gene intron. Probably assists in splicing its own and other chloroplast group II introns. The sequence is that of Maturase K from Rorippa amphibia (Great yellow-cress).